The primary structure comprises 502 residues: Glycerol kinase (502 aa).

T14 provides a ligand contact to ADP. 3 residues coordinate ATP: T14, T15, and S16. T14 is a binding site for sn-glycerol 3-phosphate. R18 serves as a coordination point for ADP. Residues R84, E85, and Y136 each contribute to the sn-glycerol 3-phosphate site. The glycerol site is built by R84, E85, and Y136. H232 carries the phosphohistidine; by HPr modification. Position 246 (D246) interacts with sn-glycerol 3-phosphate. Glycerol is bound by residues D246 and Q247. T268 and G311 together coordinate ADP. 4 residues coordinate ATP: T268, G311, Q315, and G412. The ADP site is built by G412 and N416.

It belongs to the FGGY kinase family. In terms of assembly, homotetramer and homodimer (in equilibrium). Post-translationally, the phosphoenolpyruvate-dependent sugar phosphotransferase system (PTS), including enzyme I, and histidine-containing protein (HPr) are required for the phosphorylation, which leads to the activation of the enzyme.

The catalysed reaction is glycerol + ATP = sn-glycerol 3-phosphate + ADP + H(+). The protein operates within polyol metabolism; glycerol degradation via glycerol kinase pathway; sn-glycerol 3-phosphate from glycerol: step 1/1. Its activity is regulated as follows. Activated by phosphorylation and inhibited by fructose 1,6-bisphosphate (FBP). Functionally, key enzyme in the regulation of glycerol uptake and metabolism. Catalyzes the phosphorylation of glycerol to yield sn-glycerol 3-phosphate. This chain is Glycerol kinase, found in Streptococcus sanguinis (strain SK36).